The chain runs to 224 residues: Urease accessory protein UreF (224 aa).

It belongs to the UreF family. As to quaternary structure, ureD, UreF and UreG form a complex that acts as a GTP-hydrolysis-dependent molecular chaperone, activating the urease apoprotein by helping to assemble the nickel containing metallocenter of UreC. The UreE protein probably delivers the nickel.

Its subcellular location is the cytoplasm. Its function is as follows. Required for maturation of urease via the functional incorporation of the urease nickel metallocenter. This Citrobacter koseri (strain ATCC BAA-895 / CDC 4225-83 / SGSC4696) protein is Urease accessory protein UreF.